A 328-amino-acid polypeptide reads, in one-letter code: Nodulation protein Z (328 aa).

A GT23 domain is found at 6 to 317 (CPEGRSVISR…FDLARGVFCQ (312 aa)).

It belongs to the glycosyltransferase 23 family.

Functionally, fucosyltransferase which adds the fucose moiety of the nod factor on its terminal reducing N-acetylglucosamine end. Uses GDP-fucose as the donor group. This Azorhizobium caulinodans (strain ATCC 43989 / DSM 5975 / JCM 20966 / LMG 6465 / NBRC 14845 / NCIMB 13405 / ORS 571) protein is Nodulation protein Z (nodZ).